The primary structure comprises 326 residues: 4-hydroxythreonine-4-phosphate dehydrogenase (326 aa).

Residues His134 and Thr135 each coordinate substrate. A divalent metal cation-binding residues include His164, His209, and His264. Substrate contacts are provided by Lys272, Asn281, and Arg290.

It belongs to the PdxA family. In terms of assembly, homodimer. Requires Zn(2+) as cofactor. Mg(2+) serves as cofactor. It depends on Co(2+) as a cofactor.

It is found in the cytoplasm. The enzyme catalyses 4-(phosphooxy)-L-threonine + NAD(+) = 3-amino-2-oxopropyl phosphate + CO2 + NADH. Its pathway is cofactor biosynthesis; pyridoxine 5'-phosphate biosynthesis; pyridoxine 5'-phosphate from D-erythrose 4-phosphate: step 4/5. Its function is as follows. Catalyzes the NAD(P)-dependent oxidation of 4-(phosphooxy)-L-threonine (HTP) into 2-amino-3-oxo-4-(phosphooxy)butyric acid which spontaneously decarboxylates to form 3-amino-2-oxopropyl phosphate (AHAP). The sequence is that of 4-hydroxythreonine-4-phosphate dehydrogenase from Colwellia psychrerythraea (strain 34H / ATCC BAA-681) (Vibrio psychroerythus).